The following is a 527-amino-acid chain: MADSRDPASDQMKHWKEQRAAQKADVLTTGAGNPVGDKLNVITVGPRGPLLVQDVVFTDEMAHFDRERIPERVVHAKGAGAFGYFEVTHDITKYSKAKVFEHIGKKTPIAVRFSTVAGESGSADTVRDPRGFAVKFYTEDGNWDLVGNNTPIFFIRDPLLFPSFIHSQKRNPQTHLKDPDMVWDFWSLRPESLHQVSFLFSDRGIPDGHRHMNGYGSHTFKLVNANGEAVYCKFHYKTDQGIKNLSVEDAARLSQEDPDYGIRDLFNAIATEKYPSWTFYIQVMTFNQAETFPFNPFDLTKVWPHKDYPLIPVGKLVLNRNPVNYFAEVEQIAFDPSNMPPGIEASPDKMLQGRLFAYPDTHRHRLGPNYLHIPVNCPYRARVANYQRDGPMCMQDNQGGAPNYYPNSFGAPEQQPSALEHSTQCSGEVQRFNTASDDNVTQVRAFYVNVLNEEQRKRLCENIAGHLKDAQIFIQKKAVKNFTEVHPDYGSRIQALLDKYNAEKPKNAIHTFVQSGSHLAAREKANL.

Alanine 2 is subject to N-acetylalanine. Serine 9 carries the phosphoserine modification. Lysine 13 is modified (N6-succinyllysine). Active-site residues include histidine 75 and asparagine 148. Residues histidine 194, serine 201, arginine 203, and asparagine 213 each contribute to the NADP(+) site. At lysine 221 the chain carries N6-succinyllysine. Residue lysine 233 is modified to N6-acetyllysine. Lysine 237, tryptophan 303, histidine 305, and lysine 306 together coordinate NADP(+). An N6-acetyllysine; alternate modification is found at lysine 306. Position 306 is an N6-succinyllysine; alternate (lysine 306). Tyrosine 358 lines the heme pocket. Phosphoserine is present on residues serine 417 and serine 422. An N6-acetyllysine; alternate modification is found at lysine 480. Lysine 480 is subject to N6-succinyllysine; alternate. At lysine 499 the chain carries N6-acetyllysine. Threonine 511 carries the post-translational modification Phosphothreonine. Residues serine 515 and serine 517 each carry the phosphoserine modification. The short motif at 524-527 is the Microbody targeting signal; atypical element; that stretch reads KANL.

It belongs to the catalase family. As to quaternary structure, homotetramer. Interacts (via microbody targeting signal) with PEX5, monomeric form interacts with PEX5, leading to its translocation into peroxisomes. Heme serves as cofactor. NADP(+) is required as a cofactor.

It is found in the peroxisome matrix. The enzyme catalyses 2 H2O2 = O2 + 2 H2O. Its function is as follows. Catalyzes the degradation of hydrogen peroxide (H(2)O(2)) generated by peroxisomal oxidases to water and oxygen, thereby protecting cells from the toxic effects of hydrogen peroxide. Promotes growth of cells including T-cells, B-cells, myeloid leukemia cells, melanoma cells, mastocytoma cells and normal and transformed fibroblast cells. This is Catalase (CAT) from Pongo abelii (Sumatran orangutan).